A 77-amino-acid chain; its full sequence is Dermatoxin-S1 (77 aa).

Residues 1–22 (MAFLKKSLFLILFLGLVPLSFC) form the signal peptide. A propeptide spanning residues 23 to 44 (ENDKREGENEEEQDDDQSEEKR) is cleaved from the precursor. Gln76 carries the glutamine amide modification.

In terms of tissue distribution, expressed by the skin glands.

The protein resides in the secreted. Its subcellular location is the target cell membrane. Functionally, antimicrobial peptide with potent activity against Gram-positive bacteria B.megaterium, C.glutamicum and S.aureus and mollicutes A.laidlawii and S.melliferum. Less active against Gram-negative bacteria B.cepacia, P.aeruginosa, S.typhimurium and S.meliloti. Probably acts by disturbing membrane functions with its amphipathic structure. In Phyllomedusa sauvagei (Sauvage's leaf frog), this protein is Dermatoxin-S1.